Reading from the N-terminus, the 697-residue chain is Elongation factor G (697 aa).

The tr-type G domain maps to 10–285 (AKTRNIGIMA…GVIDYLPSPL (276 aa)). GTP-binding positions include 19–26 (AHIDAGKT), 83–87 (DTPGH), and 137–140 (NKMD).

Belongs to the TRAFAC class translation factor GTPase superfamily. Classic translation factor GTPase family. EF-G/EF-2 subfamily.

It localises to the cytoplasm. Functionally, catalyzes the GTP-dependent ribosomal translocation step during translation elongation. During this step, the ribosome changes from the pre-translocational (PRE) to the post-translocational (POST) state as the newly formed A-site-bound peptidyl-tRNA and P-site-bound deacylated tRNA move to the P and E sites, respectively. Catalyzes the coordinated movement of the two tRNA molecules, the mRNA and conformational changes in the ribosome. This Lactobacillus acidophilus (strain ATCC 700396 / NCK56 / N2 / NCFM) protein is Elongation factor G.